Reading from the N-terminus, the 1685-residue chain is MDDDNLDELVAHSPGPDGPPQVGSSELASDAEESSNGHSEDSEDDTGSEQDDDTDGEETEGLSEEEDPEDRSGSEDSEDGIEVPTAAVETQRKLEASSTPNSDDDAESCPICLNAFRDQAVGTPETCAHYFCLDCIIEWSRNANSCPVDRTIFKCICIRAQFNGKILKKIPVENTRACEDEEAEEEDPTFCEVCGRSDREDRLLLCDGCDAGYHMECLDPPLQEVPVDEWFCPECAVPGVDPTHDAAPVSDEEVSLLLADVVPTTSRLRPRVGRTRAIARTRQSERVRATVNRNRISSARRVQHVPRYLMSSLLDETIEAVATGLSTAVYQRPLTPRVPAKRKRKAGRRKKVLGRKKTRSRSSVKSKSGGTRAKKRQHRVRRTKGRKLKNEVTARSRIARTLGLRRPVRGTSMPSVYKPVDPSLGLMRADIGAASLSLFGDPYALDPFDSNGEQSADPPSPLSAKRRVLSRSALQSHQPVARPVAMGLARRQLPAVAPEPSVEEAPVPDLLGSILCGQSLLMMSSADVVIHRDGSLSAKRAAPVSLQRNSVTQSREESRLRDNLQPGALPSESVSGGLIGDRRPNSGLSCGDRTALRCLPAQIVQTPVRSDSSVTPRSGLSGNLSDESRPKWKHSNSPRLNGSNVRVGSASTKTMTHSNFPSKNIAPGHPQKTDPRRPDFSKLPRIPKIRRDGSNSTQDQAPASGQTVELPSACISRLTGREGPGQPGRGRADSEPSSRGPQETGSHTSGSRPPAPSSHGNLAPLGPSRGKGIGSSFESFRINIPGNTAHCSQLSSPGFCNTFRPVDSKVQRKENPSPLFSIKKPKQLKSEIYDPFDPTGSDSSPPSSSPESLGSGLLPSEITRTISINSPKAPAFQTVRCVTSYRVESVFGTEMDPDPQPPGEPVSGMLELLGKGPAEGASDLEQEGLGEIEPTEIQGSSARAQRPSPPDPWDDEDGVSCTPFFGSEERTVTCVTVEEPSVPSPDAPQITTHRIVEFRASSRSRSTSSSRSRKKTKKKKKVAREHQRTRSSTRSGSRDRTSRSVSPFTEEHTKRHRAKTKSRRSSSDRASSQDRAKRRKDRDREHRRGPWGHGRCWRKSRSRSGSPGSSSCERHESRRRKRRHSGSRSRGRDGSPHSSLERDRRHKHRERSRERMDKKESMTRSRERRRWRSRSPSVEHRTRRPHSREKHPHSPEKKGAVREVSPAPAPQGEPRQDGDHSTKPPVSEVSVLPEVVSVLPEVVVADLNPPEVPPVLAESVSCVPEDLDYGDSVEAGHVFEDFSNEAIFIQLDDMSSPPSPESTDSSPERDFLPNPILPPASLPQNSTLPVTQREVLPIHSEDISKPAPQPLAPSDQCLLRQDTVETTATTLSTPGVLPMGKDSPLLSGRGCEVVRPKDAVAPAPLLRSRTLVKRVTWNLQEAEASTPALDRDPRTPLQRPQRPQEGDWDAEDRALIGFQQAPFSELPPPIHVLQESGLPDADPSQPPGVPRAEGPPAVGTLHSAGGILAQVYSPNMPPPLAQPSSIPPYALVNQPSVQLILQGTLPLASCGAAQNLAPVPTMPATASELAVPTTNNSEERTATPKTAAEKTKKEEYMKKLHMQERAVEEVKLAIKPFYQKREVTKEEYKDILRKAVQKICHSKSGEINPVKVANLVKAYVDKYRHMRKHKKTEAGEEPPTQGAET.

The segment at 1–82 (MDDDNLDELV…GSEDSEDGIE (82 aa)) is disordered. A compositionally biased stretch (acidic residues) spans 41–81 (DSEDDTGSEQDDDTDGEETEGLSEEEDPEDRSGSEDSEDGI). Residues 109–150 (CPICLNAFRDQAVGTPETCAHYFCLDCIIEWSRNANSCPVDR) form an RING-type; degenerate zinc finger. The PHD-type zinc finger occupies 188-238 (PTFCEVCGRSDREDRLLLCDGCDAGYHMECLDPPLQEVPVDEWFCPECAVP). 5 disordered regions span residues 333–390 (PLTP…KLKN), 449–483 (DSNG…VARP), 537–590 (SAKR…GLSC), 606–777 (TPVR…GSSF), and 809–860 (KVQR…LLPS). T335 is modified (phosphothreonine). Composition is skewed to basic residues over residues 339–364 (PAKR…RSSV) and 372–387 (RAKK…KGRK). A phosphoserine mark is found at S450 and S460. 2 stretches are compositionally biased toward polar residues: residues 606 to 625 (TPVR…GNLS) and 637 to 662 (SPRL…NFPS). A compositionally biased stretch (basic and acidic residues) spans 671–682 (QKTDPRRPDFSK). 2 stretches are compositionally biased toward polar residues: residues 694–709 (SNST…QTVE) and 737–751 (SSRG…TSGS). Phosphoserine is present on residues S817, S848, S849, S867, S870, S922, S948, S984, and S1002. The segment covering 835-860 (PFDPTGSDSSPPSSSPESLGSGLLPS) has biased composition (low complexity). Disordered regions lie at residues 892-1229 (GTEM…VSEV), 1290-1355 (QLDD…APSD), and 1369-1390 (TTLS…SGRG). Positions 922 to 934 (SDLEQEGLGEIEP) are enriched in acidic residues. Residues 1001-1010 (SSRSRSTSSS) are compositionally biased toward low complexity. 2 stretches are compositionally biased toward basic residues: residues 1011 to 1031 (RSRK…RTRS) and 1054 to 1064 (KRHRAKTKSRR). A compositionally biased stretch (basic and acidic residues) spans 1065–1075 (SSSDRASSQDR). Composition is skewed to basic residues over residues 1089–1102 (GPWG…KSRS) and 1117–1129 (SRRR…GSRS). Composition is skewed to basic and acidic residues over residues 1130-1143 (RGRD…LERD) and 1151-1165 (RSRE…MTRS). A phosphoserine mark is found at S1135 and S1139. Residues 1181–1191 (RTRRPHSREKH) are compositionally biased toward basic residues. A compositionally biased stretch (basic and acidic residues) spans 1192-1201 (PHSPEKKGAV). Residue S1205 is modified to Phosphoserine. The span at 1292–1305 (DDMSSPPSPESTDS) shows a compositional bias: low complexity. Residues S1372 and S1383 each carry the phosphoserine modification. T1416 is modified (phosphothreonine). 3 disordered regions span residues 1421-1448 (EAEA…EGDW), 1466-1501 (LPPP…VGTL), and 1569-1591 (LAVP…AEKT). The segment covering 1577–1591 (SEERTATPKTAAEKT) has biased composition (basic and acidic residues). A coiled-coil region spans residues 1589–1615 (EKTKKEEYMKKLHMQERAVEEVKLAIK).

Interacts with POLR2A (via the C-terminal domain).

This Rattus norvegicus (Rat) protein is PHD and RING finger domain-containing protein 1.